The following is a 470-amino-acid chain: Uronate isomerase (470 aa).

This sequence belongs to the metallo-dependent hydrolases superfamily. Uronate isomerase family.

The catalysed reaction is D-glucuronate = D-fructuronate. The enzyme catalyses aldehydo-D-galacturonate = keto-D-tagaturonate. It functions in the pathway carbohydrate metabolism; pentose and glucuronate interconversion. The polypeptide is Uronate isomerase (Escherichia fergusonii (strain ATCC 35469 / DSM 13698 / CCUG 18766 / IAM 14443 / JCM 21226 / LMG 7866 / NBRC 102419 / NCTC 12128 / CDC 0568-73)).